The primary structure comprises 355 residues: Cyanide hydratase (355 aa).

The CN hydrolase domain occupies 6–285; the sequence is YKAAAVTSEP…DGLLFVDIDL (280 aa). The Proton acceptor role is filled by E46. The active site involves K128. C163 serves as the catalytic Nucleophile.

Belongs to the carbon-nitrogen hydrolase superfamily. Nitrilase family. Oligomer of dimers, forming left-handed helical fibers.

It carries out the reaction formamide = hydrogen cyanide + H2O. In terms of biological role, catalyzes the hydration of cyanide to formamide. Degradation of cyanide may be important for plant pathogenic fungi in infection of cyanogenic plants. The chain is Cyanide hydratase from Gibberella zeae (strain ATCC MYA-4620 / CBS 123657 / FGSC 9075 / NRRL 31084 / PH-1) (Wheat head blight fungus).